The chain runs to 264 residues: Probable aquaporin TIP3-1 (264 aa).

Helical transmembrane passes span 28-48 (AAIS…GSIL) and 62-82 (GLVA…AVAV). Residues 90–92 (NPA) carry the NPA 1 motif. The next 3 helical transmembrane spans lie at 105 to 125 (LIRA…ATLL), 149 to 169 (AVLL…ATVI), and 176 to 196 (VGTI…LAGG). The short motif at 204 to 206 (NPA) is the NPA 2 element. Residues 224 to 244 (YWLGPFVGAGLAGLLYEYLVI) traverse the membrane as a helical segment.

It belongs to the MIP/aquaporin (TC 1.A.8) family. TIP (TC 1.A.8.10) subfamily. In terms of tissue distribution, expressed in leaves and at lower levels in roots.

The protein resides in the vacuole membrane. In terms of biological role, aquaporins facilitate the transport of water and small neutral solutes across cell membranes. May be involved in transport from the vacuolar compartment to the cytoplasm. This is Probable aquaporin TIP3-1 (TIP3-1) from Oryza sativa subsp. japonica (Rice).